The sequence spans 244 residues: Phosphoribosylaminoimidazole-succinocarboxamide synthase (244 aa).

The protein belongs to the SAICAR synthetase family.

It carries out the reaction 5-amino-1-(5-phospho-D-ribosyl)imidazole-4-carboxylate + L-aspartate + ATP = (2S)-2-[5-amino-1-(5-phospho-beta-D-ribosyl)imidazole-4-carboxamido]succinate + ADP + phosphate + 2 H(+). It participates in purine metabolism; IMP biosynthesis via de novo pathway; 5-amino-1-(5-phospho-D-ribosyl)imidazole-4-carboxamide from 5-amino-1-(5-phospho-D-ribosyl)imidazole-4-carboxylate: step 1/2. This is Phosphoribosylaminoimidazole-succinocarboxamide synthase from Prochlorococcus marinus (strain SARG / CCMP1375 / SS120).